We begin with the raw amino-acid sequence, 183 residues long: Photosystem II extrinsic protein V (183 aa).

A signal peptide spans 1–31 (MTFGHCRRASTLRSAFVLGLCGLLLAGCSGA). Cys84, Cys87, His88, and Cys138 together coordinate heme c.

The protein belongs to the cytochrome c family. PsbV subfamily. PSII is composed of 1 copy each of membrane proteins PsbA, PsbB, PsbC, PsbD, PsbE, PsbF, PsbH, PsbI, PsbJ, PsbK, PsbL, PsbM, PsbT, PsbX, Psb30/Ycf12, peripheral proteins PsbO, CyanoQ (PsbQ), PsbU, PsbV and a large number of cofactors. It forms dimeric complexes. Heme c is required as a cofactor.

The protein resides in the cell inner membrane. Probably one of the extrinsic, lumenal subunits of photosystem II (PSII). PSII is a light-driven water plastoquinone oxidoreductase, using light energy to abstract electrons from H(2)O, generating a proton gradient subsequently used for ATP formation. The extrinsic proteins stabilize the structure of photosystem II oxygen-evolving complex (OEC), the ion environment of oxygen evolution and protect the OEC against heat-induced inactivation. Low-potential cytochrome c that plays a role in the OEC of PSII. In Gloeobacter violaceus (strain ATCC 29082 / PCC 7421), this protein is Photosystem II extrinsic protein V (psbV1).